The following is a 443-amino-acid chain: UPF0656 protein C926.02 (443 aa).

Belongs to the UPF0656 family.

It localises to the cytoplasm. Its subcellular location is the nucleus. This is UPF0656 protein C926.02 from Schizosaccharomyces pombe (strain 972 / ATCC 24843) (Fission yeast).